The following is a 361-amino-acid chain: 5-formaminoimidazole-4-carboxamide-1-(beta)-D-ribofuranosyl 5'-monophosphate synthetase (361 aa).

5-amino-1-(5-phospho-beta-D-ribosyl)imidazole-4-carboxamide is bound by residues histidine 27 and serine 94. The region spanning 116-348 (RAILRWEAER…MGQRIAREIK (233 aa)) is the ATP-grasp domain. ATP-binding positions include 146 to 208 (PDDI…ANYC) and glutamate 230. Asparagine 258 contacts 5-amino-1-(5-phospho-beta-D-ribosyl)imidazole-4-carboxamide. The Mg(2+) site is built by glutamine 297 and glutamate 310.

It belongs to the phosphohexose mutase family. It depends on Mg(2+) as a cofactor. Mn(2+) is required as a cofactor.

The enzyme catalyses 5-amino-1-(5-phospho-beta-D-ribosyl)imidazole-4-carboxamide + formate + ATP = 5-formamido-1-(5-phospho-D-ribosyl)imidazole-4-carboxamide + ADP + phosphate. The protein operates within purine metabolism; IMP biosynthesis via de novo pathway; 5-formamido-1-(5-phospho-D-ribosyl)imidazole-4-carboxamide from 5-amino-1-(5-phospho-D-ribosyl)imidazole-4-carboxamide (formate route): step 1/1. Its function is as follows. Catalyzes the ATP- and formate-dependent formylation of 5-aminoimidazole-4-carboxamide-1-beta-d-ribofuranosyl 5'-monophosphate (AICAR) to 5-formaminoimidazole-4-carboxamide-1-beta-d-ribofuranosyl 5'-monophosphate (FAICAR) in the absence of folates. The sequence is that of 5-formaminoimidazole-4-carboxamide-1-(beta)-D-ribofuranosyl 5'-monophosphate synthetase from Methanococcus maripaludis (strain C7 / ATCC BAA-1331).